Reading from the N-terminus, the 131-residue chain is Small ribosomal subunit protein uS8 (131 aa).

This sequence belongs to the universal ribosomal protein uS8 family. In terms of assembly, part of the 30S ribosomal subunit. Contacts proteins S5 and S12.

Functionally, one of the primary rRNA binding proteins, it binds directly to 16S rRNA central domain where it helps coordinate assembly of the platform of the 30S subunit. The protein is Small ribosomal subunit protein uS8 of Malacoplasma penetrans (strain HF-2) (Mycoplasma penetrans).